The primary structure comprises 197 residues: MLFTIKPSFLKPVGFIQTRNLNRLYPKQRIPKRPKIPMGSKIAEVTETTSAYYNPPASSPDVRITPPVFRYDAPPIHQRDTSLSKESMFLPPAVSRKSKSKGKLRFSTHQLSSEDIKSIQDLRTKDPNAWTTGTLSKKFNTTRLLISRVCEAPKERIQKVEENFEAEKLAWGSKKREIRRQRASRQAFRTLERVAQV.

A mitochondrion-targeting transit peptide spans 1–20 (MLFTIKPSFLKPVGFIQTRN).

Belongs to the mitochondrion-specific ribosomal protein mL58 family. Component of the mitochondrial large ribosomal subunit (mt-LSU). Mature yeast 74S mitochondrial ribosomes consist of a small (37S) and a large (54S) subunit. The 37S small subunit contains a 15S ribosomal RNA (15S mt-rRNA) and at least 32 different proteins. The 54S large subunit contains a 21S rRNA (21S mt-rRNA) and at least 45 different proteins.

The protein resides in the mitochondrion. Component of the mitochondrial ribosome (mitoribosome), a dedicated translation machinery responsible for the synthesis of mitochondrial genome-encoded proteins, including at least some of the essential transmembrane subunits of the mitochondrial respiratory chain. The mitoribosomes are attached to the mitochondrial inner membrane and translation products are cotranslationally integrated into the membrane. This chain is Large ribosomal subunit protein mL58 (mrpl20), found in Schizosaccharomyces pombe (strain 972 / ATCC 24843) (Fission yeast).